Consider the following 281-residue polypeptide: Glyoxalase 1 (281 aa).

2 consecutive VOC domains span residues 4 to 127 (RALH…IGKA) and 132 to 251 (KVLR…FVGD).

The protein belongs to the glyoxalase I family. Expressed in the following tissues in both larvae and adults: pharynx, pharyngeal-intestinal valve, intestine, anal sphincter, vulval muscle, seam cells and the nervous system.

Functionally, thought to act as a glyoxalase. May remove methylglyoxal from mitochondrial proteins. Has roles in reducing oxidative stress and increasing lifespan. In Caenorhabditis elegans, this protein is Glyoxalase 1 (glod-4).